A 278-amino-acid polypeptide reads, in one-letter code: Large ribosomal subunit protein uL2 (278 aa).

A disordered region spans residues 223–278 (GVAMNPIDHPHGGGEGRTSGGRHPVTPWGFPTKGKKTRSNKRTDTFIVSSRHNRKK).

Belongs to the universal ribosomal protein uL2 family. As to quaternary structure, part of the 50S ribosomal subunit. Forms a bridge to the 30S subunit in the 70S ribosome.

In terms of biological role, one of the primary rRNA binding proteins. Required for association of the 30S and 50S subunits to form the 70S ribosome, for tRNA binding and peptide bond formation. It has been suggested to have peptidyltransferase activity; this is somewhat controversial. Makes several contacts with the 16S rRNA in the 70S ribosome. This chain is Large ribosomal subunit protein uL2, found in Methylobacterium sp. (strain 4-46).